Consider the following 363-residue polypeptide: Chalcone synthase B (363 aa).

Residue C170 is part of the active site.

Belongs to the thiolase-like superfamily. Chalcone/stilbene synthases family.

The catalysed reaction is (E)-4-coumaroyl-CoA + 3 malonyl-CoA + 3 H(+) = 2',4,4',6'-tetrahydroxychalcone + 3 CO2 + 4 CoA. The protein operates within secondary metabolite biosynthesis; flavonoid biosynthesis. Its function is as follows. The primary product of this enzyme is 4,2',4',6'-tetrahydroxychalcone (also termed naringenin-chalcone or chalcone) which can under specific conditions spontaneously isomerize into naringenin. In Ipomoea cordatotriloba (Tievine), this protein is Chalcone synthase B (CHSB).